The sequence spans 390 residues: Mannitol-1-phosphate 5-dehydrogenase (390 aa).

Ala-3–Gly-14 is a binding site for NAD(+).

Belongs to the mannitol dehydrogenase family.

It carries out the reaction D-mannitol 1-phosphate + NAD(+) = beta-D-fructose 6-phosphate + NADH + H(+). In Buchnera aphidicola subsp. Baizongia pistaciae (strain Bp), this protein is Mannitol-1-phosphate 5-dehydrogenase.